Reading from the N-terminus, the 292-residue chain is 4-hydroxy-tetrahydrodipicolinate synthase (292 aa).

Residue T45 coordinates pyruvate. The active-site Proton donor/acceptor is the Y133. K161 acts as the Schiff-base intermediate with substrate in catalysis. I203 contacts pyruvate.

This sequence belongs to the DapA family. In terms of assembly, homotetramer; dimer of dimers.

The protein resides in the cytoplasm. The enzyme catalyses L-aspartate 4-semialdehyde + pyruvate = (2S,4S)-4-hydroxy-2,3,4,5-tetrahydrodipicolinate + H2O + H(+). It participates in amino-acid biosynthesis; L-lysine biosynthesis via DAP pathway; (S)-tetrahydrodipicolinate from L-aspartate: step 3/4. In terms of biological role, catalyzes the condensation of (S)-aspartate-beta-semialdehyde [(S)-ASA] and pyruvate to 4-hydroxy-tetrahydrodipicolinate (HTPA). The protein is 4-hydroxy-tetrahydrodipicolinate synthase of Acidiphilium cryptum (strain JF-5).